A 344-amino-acid chain; its full sequence is Aromatic amino acid aminotransferase (344 aa).

Residue Lys213 is modified to N6-(pyridoxal phosphate)lysine.

The protein belongs to the class-II pyridoxal-phosphate-dependent aminotransferase family. In terms of assembly, homodimer. Requires pyridoxal 5'-phosphate as cofactor.

The enzyme catalyses an aromatic L-alpha-amino acid + 2-oxoglutarate = an aromatic oxo-acid + L-glutamate. Its function is as follows. Aminotransferase that catalyzes the conversion of aromatic amino acids and 2-oxoglutarate into corresponding aromatic oxo acids and L-glutamate. The polypeptide is Aromatic amino acid aminotransferase (Corynebacterium diphtheriae (strain ATCC 700971 / NCTC 13129 / Biotype gravis)).